A 359-amino-acid chain; its full sequence is Palmitoyltransferase PFA5 (359 aa).

4 helical membrane-spanning segments follow: residues 10–30 (WWYS…AIAY), 47–67 (AAAI…WIIW), 164–184 (LFNQ…VSVV), and 206–226 (LVVL…FISF). One can recognise a DHHC domain in the interval 120–170 (VWCSVCQSLKGLRTHHSVHLGFCVPRLDHYCVWLGTVIGRRNYRLFNQFLM).

The protein belongs to the DHHC palmitoyltransferase family. PFA5 subfamily. Autopalmitoylated.

It is found in the membrane. It catalyses the reaction L-cysteinyl-[protein] + hexadecanoyl-CoA = S-hexadecanoyl-L-cysteinyl-[protein] + CoA. The polypeptide is Palmitoyltransferase PFA5 (PFA5) (Eremothecium gossypii (strain ATCC 10895 / CBS 109.51 / FGSC 9923 / NRRL Y-1056) (Yeast)).